Consider the following 179-residue polypeptide: ATP-dependent protease subunit HslV (179 aa).

Threonine 7 is an active-site residue. Alanine 163, cysteine 166, and threonine 169 together coordinate Na(+).

It belongs to the peptidase T1B family. HslV subfamily. In terms of assembly, a double ring-shaped homohexamer of HslV is capped on each side by a ring-shaped HslU homohexamer. The assembly of the HslU/HslV complex is dependent on binding of ATP.

Its subcellular location is the cytoplasm. The enzyme catalyses ATP-dependent cleavage of peptide bonds with broad specificity.. Its activity is regulated as follows. Allosterically activated by HslU binding. Protease subunit of a proteasome-like degradation complex believed to be a general protein degrading machinery. The protein is ATP-dependent protease subunit HslV of Amoebophilus asiaticus (strain 5a2).